A 449-amino-acid chain; its full sequence is Phosphoribosylamine--glycine ligase (449 aa).

One can recognise an ATP-grasp domain in the interval 112–325 (RELMEKYDIP…IVTLHASIAE (214 aa)). ATP is bound at residue 139–202 (IDELGKPVAV…EEKCVGEEYT (64 aa)). Q283, E295, and N297 together coordinate Mg(2+). Q283, E295, and N297 together coordinate Mn(2+).

Belongs to the GARS family. Mg(2+) serves as cofactor. It depends on Mn(2+) as a cofactor.

The catalysed reaction is 5-phospho-beta-D-ribosylamine + glycine + ATP = N(1)-(5-phospho-beta-D-ribosyl)glycinamide + ADP + phosphate + H(+). It functions in the pathway purine metabolism; IMP biosynthesis via de novo pathway; N(1)-(5-phospho-D-ribosyl)glycinamide from 5-phospho-alpha-D-ribose 1-diphosphate: step 2/2. The chain is Phosphoribosylamine--glycine ligase from Methanopyrus kandleri (strain AV19 / DSM 6324 / JCM 9639 / NBRC 100938).